Consider the following 484-residue polypeptide: Malonate-semialdehyde dehydrogenase 2 (484 aa).

The NAD(+) site is built by Phe-153, Lys-177, Glu-180, Arg-181, Ser-230, and Thr-252. Cys-285 functions as the Nucleophile in the catalytic mechanism. Glu-385 lines the NAD(+) pocket.

This sequence belongs to the aldehyde dehydrogenase family. IolA subfamily. Homotetramer.

The enzyme catalyses 3-oxopropanoate + NAD(+) + CoA + H2O = hydrogencarbonate + acetyl-CoA + NADH + H(+). It catalyses the reaction 2-methyl-3-oxopropanoate + NAD(+) + CoA + H2O = propanoyl-CoA + hydrogencarbonate + NADH + H(+). Its pathway is polyol metabolism; myo-inositol degradation into acetyl-CoA; acetyl-CoA from myo-inositol: step 7/7. In terms of biological role, catalyzes the oxidation of malonate semialdehyde (MSA) and methylmalonate semialdehyde (MMSA) into acetyl-CoA and propanoyl-CoA, respectively. Is involved in a myo-inositol catabolic pathway. Bicarbonate, and not CO2, is the end-product of the enzymatic reaction. This is Malonate-semialdehyde dehydrogenase 2 from Geobacillus kaustophilus (strain HTA426).